The chain runs to 66 residues: Large ribosomal subunit protein bL35 (66 aa).

Composition is skewed to basic residues over residues Met-1–Arg-16 and His-31–Arg-45. The interval Met-1–Ala-52 is disordered.

Belongs to the bacterial ribosomal protein bL35 family.

This Ligilactobacillus salivarius (strain UCC118) (Lactobacillus salivarius) protein is Large ribosomal subunit protein bL35.